A 342-amino-acid chain; its full sequence is Heat-inducible transcription repressor HrcA (342 aa).

Belongs to the HrcA family.

Its function is as follows. Negative regulator of class I heat shock genes (grpE-dnaK-dnaJ and groELS operons). Prevents heat-shock induction of these operons. The polypeptide is Heat-inducible transcription repressor HrcA (Mesoplasma florum (strain ATCC 33453 / NBRC 100688 / NCTC 11704 / L1) (Acholeplasma florum)).